A 2440-amino-acid chain; its full sequence is Nuclear receptor corepressor 1 (2440 aa).

Over residues 1 to 18 the composition is skewed to polar residues; it reads MSSSGYPPNQGAFSTEQS. Disordered regions lie at residues 1 to 177 and 206 to 231; these read MSSS…SKLS and QQQLEEEAAKPPEPEKPVSPPPVEQK. The interval 1–373 is interaction with ZBTB33 and HEXIM1; the sequence is MSSSGYPPNQ…QRGAGLSATI (373 aa). The segment covering 51-64 has biased composition (low complexity); the sequence is SQASQLLQQQQQQQ. 3 stretches are compositionally biased toward basic and acidic residues: residues 77-88, 99-119, and 141-155; these read PGSDRPQERRTS, VDHDSLESKRPRLEQVSDSHF, and ADAKKDPAFGGKHEA. Phosphoserine is present on Ser-172. Residues 174 to 216 adopt a coiled-coil conformation; that stretch reads SKLSKEELIQSMDRVDREIAKVEQQILKLKKKQQQLEEEAAKP. The span at 212 to 221 shows a compositional bias: basic and acidic residues; sequence EAAKPPEPEK. Ser-224 bears the Phosphoserine mark. The interaction with SIN3A/B stretch occupies residues 254 to 312; that stretch reads FEGLGPKVELPLYNQPSDTKVYHENIKTNQVMRKKLILFFKRRNHARKQREQKICQRYD. Residues 299 to 328 are a coiled coil; sequence ARKQREQKICQRYDQLMEAWEKKVDRIENN. The SANT 1 domain maps to 435-486; the sequence is QFMNVWTDHEKEIFKDKFIQHPKNFGLIASYLERKSVPDCVLYYYLTKKNEN. Disordered stretches follow at residues 497–632 and 677–915; these read KRRG…TEEE and NLLQ…GSIL. Positions 501–557 form a coiled coil; the sequence is RNQQIARPSQEEKVEEKEEDKAEKTEKKEEEKKDEEEKDEKEDSKENTKEKDKIDGT. Composition is skewed to basic and acidic residues over residues 509 to 531 and 541 to 556; these read SQEEKVEEKEEDKAEKTEKKEEE and KEDSKENTKEKDKIDG. Over residues 592–605 the composition is skewed to low complexity; sequence EAAAASAAAAAATE. A compositionally biased stretch (pro residues) spans 606–617; it reads EPPPPLPPPPEP. Positions 623–674 constitute an SANT 2 domain; sequence VETSRWTEEEMEVAKKGLVEHGRNWAAIAKMVGTKSEAQCKNFYFNYKRRHN. Over residues 698-708 the composition is skewed to polar residues; it reads QCESVASTVSA. The segment covering 709 to 728 has biased composition (acidic residues); that stretch reads QEDEDIEASNEEENPEDSEV. Low complexity predominate over residues 752 to 768; it reads ELEPTTETAPSTSPSLA. Residues 781–792 are compositionally biased toward polar residues; sequence ETQVNDSISAET. The segment covering 820-859 has biased composition (basic and acidic residues); the sequence is DSVDVEVRVPENHASKVEGDNTKERDLDRASEKVEPRDED. 2 stretches are compositionally biased toward polar residues: residues 864–883 and 906–915; these read QQINAQRPEPQSDNDSSATC and SLLNPTGSIL. The tract at residues 988–1816 is interaction with ETO; it reads RSSTSPCGTS…QGLPASRYNT (829 aa). Position 999 is a phosphoserine (Ser-999). A disordered region spans residues 1022-1046; it reads VRLPTTRPTRPPPPLIPSSKTTVAS. A Glycyl lysine isopeptide (Lys-Gly) (interchain with G-Cter in SUMO1); alternate cross-link involves residue Lys-1106. Residue Lys-1106 forms a Glycyl lysine isopeptide (Lys-Gly) (interchain with G-Cter in SUMO2); alternate linkage. Position 1111 is a phosphoserine (Ser-1111). A Glycyl lysine isopeptide (Lys-Gly) (interchain with G-Cter in SUMO2) cross-link involves residue Lys-1184. Residues 1184-1204 form a disordered region; the sequence is KGSISRMPIEDSSPEKGREEA. Residues Ser-1195, Ser-1196, Ser-1249, Ser-1263, Ser-1281, and Ser-1322 each carry the phosphoserine modification. Position 1336 is an N6-acetyllysine (Lys-1336). Thr-1367 is subject to Phosphothreonine. Lys-1389 participates in a covalent cross-link: Glycyl lysine isopeptide (Lys-Gly) (interchain with G-Cter in SUMO2). Residue Lys-1412 forms a Glycyl lysine isopeptide (Lys-Gly) (interchain with G-Cter in SUMO2); alternate linkage. Position 1412 is an N6-acetyllysine; alternate (Lys-1412). A disordered region spans residues 1440–1459; the sequence is AGETVRSRHTSVVSSGPSVL. 2 positions are modified to phosphoserine: Ser-1450 and Ser-1472. Polar residues predominate over residues 1488-1512; it reads YQNTMSRGSPMMNRTSDVTISSNKS. The tract at residues 1488–1554 is disordered; the sequence is YQNTMSRGSP…SPFDPHHRGS (67 aa). Residues 1501–2440 form an interaction with C1D region; it reads RTSDVTISSN…QYETLSDSDD (940 aa). Residue Lys-1518 forms a Glycyl lysine isopeptide (Lys-Gly) (interchain with G-Cter in SUMO2) linkage. Ser-1592 carries the post-translational modification Phosphoserine. 2 disordered regions span residues 1690 to 1759 and 1884 to 1922; these read PRPY…SPSP and SSAFPSGKPQPHSSVVYSEAGKDKGPPPKSRYEEELRTR. 2 stretches are compositionally biased toward basic and acidic residues: residues 1712-1729 and 1903-1921; these read AEREREREREKERERERI and AGKDKGPPPKSRYEEELRT. The CORNR box 1 signature appears at 1933–1937; the sequence is IDVII. The disordered stretch occupies residues 1943 to 1969; sequence SDKDARERGSQSSDSSSSLSSHRYETP. The segment covering 1952-1963 has biased composition (low complexity); the sequence is SQSSDSSSSLSS. Ser-1977 and Ser-1981 each carry phosphoserine. Positions 2006 to 2041 are disordered; the sequence is PTRQYEGPLHHYRPQQESPSPQQQLPPSSQAEGMGQ. The segment covering 2020–2035 has biased composition (low complexity); the sequence is QQESPSPQQQLPPSSQ. An ID1 region spans residues 2032-2115; that stretch reads PSSQAEGMGQ…QAQSVHHQRP (84 aa). Residues 2047–2050 form a required for interaction with RARA in the absence of its ligand region; the sequence is RLIT. A CORNR box 2 motif is present at residues 2055 to 2059; it reads ICQII. The segment covering 2067 to 2086 has biased composition (low complexity); it reads QVSSQTPQQPPTSTFQNSPS. The tract at residues 2067–2155 is disordered; that stretch reads QVSSQTPQQP…PYEPISPPQV (89 aa). Polar residues predominate over residues 2087-2110; it reads ALVSTPVRTKTSNRYSPESQAQSV. Phosphoserine is present on residues Ser-2102, Ser-2120, Ser-2136, Ser-2151, and Ser-2184. Basic and acidic residues predominate over residues 2124–2142; it reads LVDKSRGSRPGKSPERSHV. The interval 2212-2273 is ID2; the sequence is IFRKLNSSGG…EDIIRKALMG (62 aa). Residues 2263-2267 carry the CORNR box 3 motif; that stretch reads LEDII. A disordered region spans residues 2287 to 2440; that stretch reads SQPMGVVPGT…QYETLSDSDD (154 aa). Residues 2296–2305 show a composition bias toward polar residues; that stretch reads TANTSVVTSG. Thr-2399 bears the Phosphothreonine mark. Polar residues-rich tracts occupy residues 2407–2418 and 2431–2440; these read AVNQAAPHQQNR and QYETLSDSDD. Phosphoserine is present on residues Ser-2436 and Ser-2438.

It belongs to the N-CoR nuclear receptor corepressors family. As to quaternary structure, forms a large corepressor complex that contains SIN3A/B and histone deacetylases HDAC1 and HDAC2. This complex associates with the thyroid receptor (TR) and the retinoid acid receptor (RAR) in the absence of ligand. Interacts directly with RARA; the interaction is facilitated with RARA trimethylation. Component of the N-Cor repressor complex, at least composed of CBFA2T3, HEXIM1, NCOR1, NCOR2, HDAC3, TBL1X, TBL1XR1, CORO2A and GPS2. Interacts with ZBTB33; the interaction serves to recruit the N-CoR complex to promoter regions containing methylated CpG dinucleotides. Interacts with TRIM28 and KDM3A. Interacts (via the RD1 domain) with BAZ1A (via its N-terminal); the interaction corepresses a number of NCOR1-regulated genes. Interacts with BCL6, C1D, DACH1, HEXIM1, HDAC7, RORA, RORC, SAP30, SIAH2, SIN3A and SIN3B. May interact with DEAF1. Interacts with RXRA. Interacts with SETD5. Interacts with VDR. Interacts with ZBTB7A. Interacts with AR. Interacts with HDAC3. Post-translationally, ubiquitinated; mediated by SIAH2 and leading to its subsequent proteasomal degradation.

It is found in the nucleus. Mediates transcriptional repression by certain nuclear receptors. Part of a complex which promotes histone deacetylation and the formation of repressive chromatin structures which may impede the access of basal transcription factors. Participates in the transcriptional repressor activity produced by BCL6. Recruited by ZBTB7A to the androgen response elements/ARE on target genes, negatively regulates androgen receptor signaling and androgen-induced cell proliferation. Mediates the NR1D1-dependent repression and circadian regulation of TSHB expression. The NCOR1-HDAC3 complex regulates the circadian expression of the core clock gene ARTNL/BMAL1 and the genes involved in lipid metabolism in the liver. This Homo sapiens (Human) protein is Nuclear receptor corepressor 1 (NCOR1).